A 509-amino-acid polypeptide reads, in one-letter code: Bifunctional pantoate ligase/cytidylate kinase (509 aa).

Positions 1 to 275 (MKKLIIRKTE…CGETRLIDHV (275 aa)) are pantoate--beta-alanine ligase. 29–36 (MGNLHDGH) provides a ligand contact to ATP. The active-site Proton donor is the histidine 36. Glutamine 61 serves as a coordination point for (R)-pantoate. Glutamine 61 is a binding site for beta-alanine. 149–152 (GEKD) contacts ATP. Glutamine 155 contributes to the (R)-pantoate binding site. 186–189 (LSSR) provides a ligand contact to ATP. The tract at residues 276–509 (FLMKRRPIIA…DKIPKESEIK (234 aa)) is cytidylate kinase.

The protein in the N-terminal section; belongs to the pantothenate synthetase family. This sequence in the C-terminal section; belongs to the cytidylate kinase family. Type 1 subfamily.

It localises to the cytoplasm. The catalysed reaction is (R)-pantoate + beta-alanine + ATP = (R)-pantothenate + AMP + diphosphate + H(+). It carries out the reaction CMP + ATP = CDP + ADP. The enzyme catalyses dCMP + ATP = dCDP + ADP. Its pathway is cofactor biosynthesis; (R)-pantothenate biosynthesis; (R)-pantothenate from (R)-pantoate and beta-alanine: step 1/1. Catalyzes the condensation of pantoate with beta-alanine in an ATP-dependent reaction via a pantoyl-adenylate intermediate. In terms of biological role, catalyzes the transfer of a phosphate group from ATP to either CMP or dCMP to form CDP or dCDP and ADP, respectively. The sequence is that of Bifunctional pantoate ligase/cytidylate kinase from Prochlorococcus marinus (strain AS9601).